The following is a 247-amino-acid chain: ATP synthase subunit a, chloroplastic (247 aa).

The next 5 membrane-spanning stretches (helical) occupy residues 38–58, 95–115, 134–154, 199–219, and 220–240; these read QVLITSWVVIAILLGSATIAV, VPFIGTMFLFIFVSNWSGALL, INTTVALALLTSVAYFYAGLT, LVVVVLVSLVPSVVPIPVMFL, and GLFTSGIQALIFATLAAAYIG.

It belongs to the ATPase A chain family. In terms of assembly, F-type ATPases have 2 components, CF(1) - the catalytic core - and CF(0) - the membrane proton channel. CF(1) has five subunits: alpha(3), beta(3), gamma(1), delta(1), epsilon(1). CF(0) has four main subunits: a, b, b' and c.

The protein resides in the plastid. The protein localises to the chloroplast thylakoid membrane. Key component of the proton channel; it plays a direct role in the translocation of protons across the membrane. The polypeptide is ATP synthase subunit a, chloroplastic (Panax ginseng (Korean ginseng)).